A 207-amino-acid chain; its full sequence is Urease accessory protein UreG (207 aa).

14-21 lines the GTP pocket; the sequence is GPVGSGKT.

The protein belongs to the SIMIBI class G3E GTPase family. UreG subfamily. In terms of assembly, homodimer. UreD, UreF and UreG form a complex that acts as a GTP-hydrolysis-dependent molecular chaperone, activating the urease apoprotein by helping to assemble the nickel containing metallocenter of UreC. The UreE protein probably delivers the nickel.

Its subcellular location is the cytoplasm. Facilitates the functional incorporation of the urease nickel metallocenter. This process requires GTP hydrolysis, probably effectuated by UreG. The chain is Urease accessory protein UreG from Rhodopseudomonas palustris (strain BisB18).